Reading from the N-terminus, the 451-residue chain is Cytosolic Fe-S cluster assembly factor NAR1 (451 aa).

[4Fe-4S] cluster contacts are provided by Cys-20, Cys-56, Cys-59, Cys-62, Cys-166, Cys-213, Cys-382, and Cys-386.

The protein belongs to the NARF family.

Functionally, component of the cytosolic Fe/S protein assembly machinery. Required for maturation of extramitochondrial Fe/S proteins. May play a role in the transfer of pre-assembled Fe/S clusters to target apoproteins. The polypeptide is Cytosolic Fe-S cluster assembly factor NAR1 (NAR1) (Eremothecium gossypii (strain ATCC 10895 / CBS 109.51 / FGSC 9923 / NRRL Y-1056) (Yeast)).